The chain runs to 279 residues: Phosphatidylglycerol--prolipoprotein diacylglyceryl transferase (279 aa).

Transmembrane regions (helical) follow at residues 25–45, 60–80, 103–123, 133–153, 181–201, 209–229, and 236–256; these read WYGL…KFFV, YFIW…ILIY, FVGI…IATI, LWSL…FGRI, PSQL…LYFY, GELI…TEFL, and IGYF…MLIL. Arginine 152 contacts a 1,2-diacyl-sn-glycero-3-phospho-(1'-sn-glycerol).

The protein belongs to the Lgt family.

It localises to the cell inner membrane. The catalysed reaction is L-cysteinyl-[prolipoprotein] + a 1,2-diacyl-sn-glycero-3-phospho-(1'-sn-glycerol) = an S-1,2-diacyl-sn-glyceryl-L-cysteinyl-[prolipoprotein] + sn-glycerol 1-phosphate + H(+). The protein operates within protein modification; lipoprotein biosynthesis (diacylglyceryl transfer). Its function is as follows. Catalyzes the transfer of the diacylglyceryl group from phosphatidylglycerol to the sulfhydryl group of the N-terminal cysteine of a prolipoprotein, the first step in the formation of mature lipoproteins. In Campylobacter hominis (strain ATCC BAA-381 / DSM 21671 / CCUG 45161 / LMG 19568 / NCTC 13146 / CH001A), this protein is Phosphatidylglycerol--prolipoprotein diacylglyceryl transferase.